Here is a 208-residue protein sequence, read N- to C-terminus: Ras-related protein M-Ras (208 aa).

GTP-binding residues include Asp21, Gly22, Gly23, Val24, Gly25, Lys26, Ser27, Ala28, Phe38, Val39, Pro40, Tyr42, Pro44, and Thr45. Residue Ser27 coordinates Mg(2+). The short motif at 42–50 (YDPTIEDSY) is the Effector region element. The Mg(2+) site is built by Thr45 and Asp67. GTP is bound by residues Gly70, Asn126, Lys127, Asp129, Ser156, Ala157, and Lys158. Cysteine methyl ester is present on Cys205. Cys205 carries the S-geranylgeranyl cysteine lipid modification. The propeptide at 206-208 (VIL) is removed in mature form.

It belongs to the small GTPase superfamily. Ras family. In terms of assembly, component of the SHOC2-MRAS-PP1c (SMP) holophosphatase complex consisting of SHOC2, GTP-bound M-Ras/MRAS and the catalytic subunit of protein phosphatase 1 (either PPP1CA, PPP1CB or PPP1CC). Interacts (active GTP-bound form) with both SHOC2 and PP1c (all isoforms) to form a tertiary complex; SHOC2 and PP1c preferably bind M-Ras/MRAS, but they also bind K-Ras/KRAS, N-Ras/NRAS and H-Ras/HRAS. Interacts with RGL3. Interacts (active GTP-bound form preferentially) with RGS14. Mg(2+) is required as a cofactor. In terms of tissue distribution, expression highly restricted to the brain and heart.

The protein localises to the cell membrane. It carries out the reaction GTP + H2O = GDP + phosphate + H(+). Functionally, signal transducer in the Ras-MAPK signaling pathway that regulates cell proliferation and survival. Core component of the SHOC2-MRAS-PP1c (SMP) holophosphatase complex that regulates the MAPK pathway activation. The formation of the SMP complex only occurs when MRAS is GTP-bound. MRAS has low intrinsic GTPase activity and may require additional factors for activation. The SMP complex specifically dephosphorylates the inhibitory phosphorylation at 'Ser-259' of RAF1 kinase, 'Ser-365' of BRAF kinase and 'Ser-214' of ARAF kinase, stimulating their kinase activities. The protein is Ras-related protein M-Ras (MRAS) of Homo sapiens (Human).